The following is a 122-amino-acid chain: Large ribosomal subunit protein uL14 (122 aa).

The protein belongs to the universal ribosomal protein uL14 family. Part of the 50S ribosomal subunit. Forms a cluster with proteins L3 and L19. In the 70S ribosome, L14 and L19 interact and together make contacts with the 16S rRNA in bridges B5 and B8.

Binds to 23S rRNA. Forms part of two intersubunit bridges in the 70S ribosome. In Chlamydia trachomatis serovar A (strain ATCC VR-571B / DSM 19440 / HAR-13), this protein is Large ribosomal subunit protein uL14.